A 553-amino-acid chain; its full sequence is Serine/threonine-protein kinase WNG2 (553 aa).

Disordered regions lie at residues 1–20 and 88–107; these read MMFP…RLQR and NREP…GGAE. The first 64 residues, 1–64, serve as a signal peptide directing secretion; the sequence is MMFPAVAAPP…GLSWVSVAVA (64 aa). The Protein kinase domain maps to 125-395; that stretch reads FKQLRPVDEF…IGEVMEDPFF (271 aa). Lys-186 is an ATP binding site. Asp-278 acts as the Proton acceptor in catalysis. The segment at 432-553 is disordered; that stretch reads REKADAAAKA…GFNKEDAQES (122 aa). A compositionally biased stretch (low complexity) spans 438–451; it reads AAKAADNAEVPAAK. Composition is skewed to basic and acidic residues over residues 465–486, 494–524, and 531–553; these read GDRD…EKGR, EGNH…ENRE, and QREE…AQES.

Belongs to the protein kinase superfamily. STE Ser/Thr protein kinase family. WNG subfamily. It depends on Mg(2+) as a cofactor.

The protein resides in the cytoplasmic granule. It localises to the secreted. The protein localises to the parasitophorous vacuole lumen. It catalyses the reaction L-seryl-[protein] + ATP = O-phospho-L-seryl-[protein] + ADP + H(+). The catalysed reaction is L-threonyl-[protein] + ATP = O-phospho-L-threonyl-[protein] + ADP + H(+). Probable serine/threonine-protein kinase. In Toxoplasma gondii, this protein is Serine/threonine-protein kinase WNG2.